A 282-amino-acid polypeptide reads, in one-letter code: MSLVTSLTYVLPHRLLSSLARALAYSDRPATKQWLIDTVTRKFGVDLSEAQEPDPRAYPTFNAFFTRALKHGARVPDADPAALLMPADGRISQLGPIENGRIFQAKGQSFTAAELLGDAGAAAPFNNGLFATVYLSPKDYHRVHMPWTGTLRTTVHVPGRLFSVGPDAVRNVPRLFARNERLVCHFDTDFGPMASVMVGALLVSGVETVWSGVEIPRYGDRITRKDYRGKGIVLEKFAEMARFNYGSTVIVLLPPGVATLDGGLGAETSVRLGQALARRQLG.

Active-site charge relay system; for autoendoproteolytic cleavage activity residues include Asp-88, His-144, and Ser-247. Ser-247 (schiff-base intermediate with substrate; via pyruvic acid; for decarboxylase activity) is an active-site residue. A Pyruvic acid (Ser); by autocatalysis modification is found at Ser-247.

It belongs to the phosphatidylserine decarboxylase family. PSD-B subfamily. Prokaryotic type I sub-subfamily. In terms of assembly, heterodimer of a large membrane-associated beta subunit and a small pyruvoyl-containing alpha subunit. Pyruvate is required as a cofactor. Post-translationally, is synthesized initially as an inactive proenzyme. Formation of the active enzyme involves a self-maturation process in which the active site pyruvoyl group is generated from an internal serine residue via an autocatalytic post-translational modification. Two non-identical subunits are generated from the proenzyme in this reaction, and the pyruvate is formed at the N-terminus of the alpha chain, which is derived from the carboxyl end of the proenzyme. The autoendoproteolytic cleavage occurs by a canonical serine protease mechanism, in which the side chain hydroxyl group of the serine supplies its oxygen atom to form the C-terminus of the beta chain, while the remainder of the serine residue undergoes an oxidative deamination to produce ammonia and the pyruvoyl prosthetic group on the alpha chain. During this reaction, the Ser that is part of the protease active site of the proenzyme becomes the pyruvoyl prosthetic group, which constitutes an essential element of the active site of the mature decarboxylase.

It localises to the cell membrane. It catalyses the reaction a 1,2-diacyl-sn-glycero-3-phospho-L-serine + H(+) = a 1,2-diacyl-sn-glycero-3-phosphoethanolamine + CO2. The protein operates within phospholipid metabolism; phosphatidylethanolamine biosynthesis; phosphatidylethanolamine from CDP-diacylglycerol: step 2/2. Its function is as follows. Catalyzes the formation of phosphatidylethanolamine (PtdEtn) from phosphatidylserine (PtdSer). This chain is Phosphatidylserine decarboxylase proenzyme, found in Xanthomonas oryzae pv. oryzae (strain MAFF 311018).